Reading from the N-terminus, the 294-residue chain is 4-hydroxy-tetrahydrodipicolinate synthase (294 aa).

T45 lines the pyruvate pocket. The Proton donor/acceptor role is filled by Y133. Catalysis depends on K162, which acts as the Schiff-base intermediate with substrate. I204 contributes to the pyruvate binding site.

The protein belongs to the DapA family. Homotetramer; dimer of dimers.

The protein localises to the cytoplasm. The enzyme catalyses L-aspartate 4-semialdehyde + pyruvate = (2S,4S)-4-hydroxy-2,3,4,5-tetrahydrodipicolinate + H2O + H(+). The protein operates within amino-acid biosynthesis; L-lysine biosynthesis via DAP pathway; (S)-tetrahydrodipicolinate from L-aspartate: step 3/4. Its function is as follows. Catalyzes the condensation of (S)-aspartate-beta-semialdehyde [(S)-ASA] and pyruvate to 4-hydroxy-tetrahydrodipicolinate (HTPA). This is 4-hydroxy-tetrahydrodipicolinate synthase from Bartonella henselae (strain ATCC 49882 / DSM 28221 / CCUG 30454 / Houston 1) (Rochalimaea henselae).